A 176-amino-acid polypeptide reads, in one-letter code: Cytochrome c oxidase subunit 5b-1, mitochondrial (176 aa).

A mitochondrion-targeting transit peptide spans 1–55 (MWRRIVSSQLKTLAADVVAASPRRSIAATTRPVGFYLAANRSAISASSFVIPRRF). 3 residues coordinate Zn(2+): Cys122, Cys146, and Cys149. Residues 157–176 (VVGPGGPPDGHGDEDDEHHH) form a disordered region.

It belongs to the cytochrome c oxidase subunit 5B (TC 3.D.4.11) family.

It is found in the mitochondrion inner membrane. This protein is one of the nuclear-coded polypeptide chains of cytochrome c oxidase, the terminal oxidase in mitochondrial electron transport. The sequence is that of Cytochrome c oxidase subunit 5b-1, mitochondrial (COX5B-1) from Arabidopsis thaliana (Mouse-ear cress).